Consider the following 211-residue polypeptide: Protein-methionine-sulfoxide reductase heme-binding subunit MsrQ (211 aa).

A run of 4 helical transmembrane segments spans residues 17 to 37 (LAGL…GLGA), 82 to 102 (LWCF…ELGV), 116 to 136 (PYLT…FTST), and 153 to 173 (FVYL…KIIS).

The protein belongs to the MsrQ family. In terms of assembly, heterodimer of a catalytic subunit (MsrP) and a heme-binding subunit (MsrQ). The cofactor is FMN. Requires heme b as cofactor.

Its subcellular location is the cell inner membrane. Part of the MsrPQ system that repairs oxidized periplasmic proteins containing methionine sulfoxide residues (Met-O), using respiratory chain electrons. Thus protects these proteins from oxidative-stress damage caused by reactive species of oxygen and chlorine generated by the host defense mechanisms. MsrPQ is essential for the maintenance of envelope integrity under bleach stress, rescuing a wide series of structurally unrelated periplasmic proteins from methionine oxidation, including the primary periplasmic chaperone SurA and the lipoprotein Pal. MsrQ provides electrons for reduction to the reductase catalytic subunit MsrP, using the quinone pool of the respiratory chain. The sequence is that of Protein-methionine-sulfoxide reductase heme-binding subunit MsrQ from Shigella boydii serotype 18 (strain CDC 3083-94 / BS512).